We begin with the raw amino-acid sequence, 270 residues long: Formamidopyrimidine-DNA glycosylase (270 aa).

The Schiff-base intermediate with DNA role is filled by Pro2. Catalysis depends on Glu3, which acts as the Proton donor. Lys58 functions as the Proton donor; for beta-elimination activity in the catalytic mechanism. The DNA site is built by His91, Arg110, and Lys151. The segment at 236 to 270 (FVYGRGGEACKVCGTELRNVVLGQRASVFCPRCQR) adopts an FPG-type zinc-finger fold. Arg260 (proton donor; for delta-elimination activity) is an active-site residue.

Belongs to the FPG family. In terms of assembly, monomer. The cofactor is Zn(2+).

The catalysed reaction is Hydrolysis of DNA containing ring-opened 7-methylguanine residues, releasing 2,6-diamino-4-hydroxy-5-(N-methyl)formamidopyrimidine.. The enzyme catalyses 2'-deoxyribonucleotide-(2'-deoxyribose 5'-phosphate)-2'-deoxyribonucleotide-DNA = a 3'-end 2'-deoxyribonucleotide-(2,3-dehydro-2,3-deoxyribose 5'-phosphate)-DNA + a 5'-end 5'-phospho-2'-deoxyribonucleoside-DNA + H(+). Its function is as follows. Involved in base excision repair of DNA damaged by oxidation or by mutagenic agents. Acts as a DNA glycosylase that recognizes and removes damaged bases. Has a preference for oxidized purines, such as 7,8-dihydro-8-oxoguanine (8-oxoG). Has AP (apurinic/apyrimidinic) lyase activity and introduces nicks in the DNA strand. Cleaves the DNA backbone by beta-delta elimination to generate a single-strand break at the site of the removed base with both 3'- and 5'-phosphates. In Pseudomonas fluorescens (strain SBW25), this protein is Formamidopyrimidine-DNA glycosylase.